We begin with the raw amino-acid sequence, 124 residues long: Urotensin-2 (124 aa).

The signal sequence occupies residues 1-20 (MYKLASCCLLFIGFLNPLLS). Positions 21 to 110 (LPLLDSREIS…HLLARIWKPY (90 aa)) are excised as a propeptide. A disulfide bond links cysteine 118 and cysteine 123.

It belongs to the urotensin-2 family. Brain specific.

Its subcellular location is the secreted. Highly potent vasoconstrictor. The chain is Urotensin-2 (UTS2) from Homo sapiens (Human).